The primary structure comprises 347 residues: Dihydroorotase (347 aa).

Zn(2+) is bound by residues H13 and H15. Substrate contacts are provided by residues 15–17 and N41; that span reads HLR. Positions 99, 136, and 174 each coordinate Zn(2+). N6-carboxylysine is present on K99. H136 is a binding site for substrate. L219 is a substrate binding site. Position 247 (D247) interacts with Zn(2+). D247 is an active-site residue. The substrate site is built by H251 and A263.

It belongs to the metallo-dependent hydrolases superfamily. DHOase family. Class II DHOase subfamily. In terms of assembly, homodimer. The cofactor is Zn(2+).

The catalysed reaction is (S)-dihydroorotate + H2O = N-carbamoyl-L-aspartate + H(+). Its pathway is pyrimidine metabolism; UMP biosynthesis via de novo pathway; (S)-dihydroorotate from bicarbonate: step 3/3. Its function is as follows. Catalyzes the reversible cyclization of carbamoyl aspartate to dihydroorotate. The polypeptide is Dihydroorotase (Sinorhizobium medicae (strain WSM419) (Ensifer medicae)).